The sequence spans 176 residues: ATP synthase subunit delta (176 aa).

It belongs to the ATPase delta chain family. As to quaternary structure, F-type ATPases have 2 components, F(1) - the catalytic core - and F(0) - the membrane proton channel. F(1) has five subunits: alpha(3), beta(3), gamma(1), delta(1), epsilon(1). F(0) has three main subunits: a(1), b(2) and c(10-14). The alpha and beta chains form an alternating ring which encloses part of the gamma chain. F(1) is attached to F(0) by a central stalk formed by the gamma and epsilon chains, while a peripheral stalk is formed by the delta and b chains.

Its subcellular location is the cell inner membrane. In terms of biological role, f(1)F(0) ATP synthase produces ATP from ADP in the presence of a proton or sodium gradient. F-type ATPases consist of two structural domains, F(1) containing the extramembraneous catalytic core and F(0) containing the membrane proton channel, linked together by a central stalk and a peripheral stalk. During catalysis, ATP synthesis in the catalytic domain of F(1) is coupled via a rotary mechanism of the central stalk subunits to proton translocation. Functionally, this protein is part of the stalk that links CF(0) to CF(1). It either transmits conformational changes from CF(0) to CF(1) or is implicated in proton conduction. This chain is ATP synthase subunit delta, found in Campylobacter fetus subsp. fetus (strain 82-40).